We begin with the raw amino-acid sequence, 908 residues long: MNARIDTGNEAFSAAELATAESRASATPMMEQYIEIKANNPDSLLFYRMGDFYELFFEDALEASRALGITLTKRGQHMGQDIPMCGVPVHAADDYLQKLISLGFRVAVCEQIEDPAEAKKRGAKSVVRRDVVRLVTPGTITEEKLLSPSESNYLMALTRIRGSGEALLALAWIDISTGVFRLAETEASRLLADILRIDPRELILPDTIFHDPELKPVFDVLGRTAVPQPSVLFDSASAEGRIARYFGVATLDGFGTFSRAELAAAAAAVAYVEKTQIAERPPLGKPERESAASTLFIDPATRANLELARTLSGDRNGSLLKAIDRTVTGGGARLLAERLMSPLTDPARINARLDSIGFLIDEPLLCGNLRDTLKHVPDMPRALSRLALDRGGPRDLSAIRQGLDAAGGVAVMLGKAVLPEELGQALSELQALPATLEKLLAETLAEELPLLKRDGGFLRDGANAELDEVRALRDQSRRVIAGLQLQYAEETGIRSLKIKHNNVLGYFIEVTAGNASPMTETADAKARFIHRQTMANAMRFTTTELADLESRIANAADQALTIELEAFDRMTAAVVAEAEAIKSGARALAVIDVAAGLALLAEEQAYCRPQVDGSKMFAIESGRHPVVEQALRRQAGGPFVANHCDLSPKTGDRDGAIWLLTGPNMGGKSTFLRQNALISILAQMGSFVPATSAHIGIVDRLFSRVGASDDLARGRSTFMVEMVETAAILNQASDRSLVILDEIGRGTATFDGLSIAWAAVEHLHEANRCRGLFATHFHELTVLSEKLGRLSNATMRVKEWDGDVIFLHEVGPGAADRSYGIQVARLAGLPASVVARARDVLTRLEDADRKNPASQLIDDLPLFQVAVRREETARGASKVEEALKAMSLDDMTPREAMDALYDLKKKLK.

662–669 contacts ATP; the sequence is GPNMGGKS.

Belongs to the DNA mismatch repair MutS family.

Functionally, this protein is involved in the repair of mismatches in DNA. It is possible that it carries out the mismatch recognition step. This protein has a weak ATPase activity. This chain is DNA mismatch repair protein MutS, found in Rhizobium johnstonii (strain DSM 114642 / LMG 32736 / 3841) (Rhizobium leguminosarum bv. viciae).